The primary structure comprises 317 residues: Methionyl-tRNA formyltransferase (317 aa).

(6S)-5,6,7,8-tetrahydrofolate is bound at residue 112 to 115 (SILP).

The protein belongs to the Fmt family.

It catalyses the reaction L-methionyl-tRNA(fMet) + (6R)-10-formyltetrahydrofolate = N-formyl-L-methionyl-tRNA(fMet) + (6S)-5,6,7,8-tetrahydrofolate + H(+). Its function is as follows. Attaches a formyl group to the free amino group of methionyl-tRNA(fMet). The formyl group appears to play a dual role in the initiator identity of N-formylmethionyl-tRNA by promoting its recognition by IF2 and preventing the misappropriation of this tRNA by the elongation apparatus. This Mannheimia succiniciproducens (strain KCTC 0769BP / MBEL55E) protein is Methionyl-tRNA formyltransferase.